A 446-amino-acid chain; its full sequence is Exodeoxyribonuclease 7 large subunit (446 aa).

Belongs to the XseA family. As to quaternary structure, heterooligomer composed of large and small subunits.

Its subcellular location is the cytoplasm. The catalysed reaction is Exonucleolytic cleavage in either 5'- to 3'- or 3'- to 5'-direction to yield nucleoside 5'-phosphates.. Bidirectionally degrades single-stranded DNA into large acid-insoluble oligonucleotides, which are then degraded further into small acid-soluble oligonucleotides. The protein is Exodeoxyribonuclease 7 large subunit of Streptococcus pyogenes serotype M3 (strain ATCC BAA-595 / MGAS315).